The chain runs to 312 residues: tRNA dimethylallyltransferase (312 aa).

Position 15–22 (15–22 (GPTAAGKS)) interacts with ATP. 17-22 (TAAGKS) lines the substrate pocket. The tract at residues 40 to 43 (DSMQ) is interaction with substrate tRNA.

It belongs to the IPP transferase family. As to quaternary structure, monomer. The cofactor is Mg(2+).

It catalyses the reaction adenosine(37) in tRNA + dimethylallyl diphosphate = N(6)-dimethylallyladenosine(37) in tRNA + diphosphate. Catalyzes the transfer of a dimethylallyl group onto the adenine at position 37 in tRNAs that read codons beginning with uridine, leading to the formation of N6-(dimethylallyl)adenosine (i(6)A). This is tRNA dimethylallyltransferase from Streptomyces griseus subsp. griseus (strain JCM 4626 / CBS 651.72 / NBRC 13350 / KCC S-0626 / ISP 5235).